A 158-amino-acid polypeptide reads, in one-letter code: Small ribosomal subunit protein uS15 (158 aa).

Positions 1–18 (MARMHARKRGKSGSKRPP) are enriched in basic residues. The disordered stretch occupies residues 1–21 (MARMHARKRGKSGSKRPPRTA).

Belongs to the universal ribosomal protein uS15 family. As to quaternary structure, part of the 30S ribosomal subunit.

This Pyrococcus furiosus (strain ATCC 43587 / DSM 3638 / JCM 8422 / Vc1) protein is Small ribosomal subunit protein uS15.